The chain runs to 463 residues: Asparagine--tRNA ligase (463 aa).

This sequence belongs to the class-II aminoacyl-tRNA synthetase family. As to quaternary structure, homodimer.

The protein resides in the cytoplasm. It carries out the reaction tRNA(Asn) + L-asparagine + ATP = L-asparaginyl-tRNA(Asn) + AMP + diphosphate + H(+). The polypeptide is Asparagine--tRNA ligase (Clostridium tetani (strain Massachusetts / E88)).